The following is a 635-amino-acid chain: Chaperone protein DnaK (635 aa).

T198 bears the Phosphothreonine; by autocatalysis mark. A disordered region spans residues Q606–K635. Positions D622 to K635 are enriched in acidic residues.

Belongs to the heat shock protein 70 family.

In terms of biological role, acts as a chaperone. This Novosphingobium aromaticivorans (strain ATCC 700278 / DSM 12444 / CCUG 56034 / CIP 105152 / NBRC 16084 / F199) protein is Chaperone protein DnaK.